The sequence spans 326 residues: Metallophosphoesterase domain-containing protein 1 (326 aa).

This sequence belongs to the UPF0046 family. Expressed predominantly in adult brain.

Its function is as follows. May have metallophosphoesterase activity (in vitro). This chain is Metallophosphoesterase domain-containing protein 1 (MPPED1), found in Homo sapiens (Human).